The chain runs to 207 residues: Large ribosomal subunit protein uL3 (207 aa).

The tract at residues 126 to 149 (GPASHGSKKWHRRPGSIGQRKTPG) is disordered.

It belongs to the universal ribosomal protein uL3 family. As to quaternary structure, part of the 50S ribosomal subunit. Forms a cluster with proteins L14 and L19.

Functionally, one of the primary rRNA binding proteins, it binds directly near the 3'-end of the 23S rRNA, where it nucleates assembly of the 50S subunit. The chain is Large ribosomal subunit protein uL3 from Deinococcus geothermalis (strain DSM 11300 / CIP 105573 / AG-3a).